Consider the following 415-residue polypeptide: MIENYNDIAITDTRRKILNIIDKTLIAMDPENAIKNFIEKNNIKFDSKRIFLIGFGKAAFKMYSGIRPFILKDLVYASIIVPDDEKTNDYNELRILRGTHPFTGDLSVSSSISMLSGLKNLNENDLVIVLISGGGSSLFEIPEDGINIDDIKNISKTMMDKGCDIYELNMVRSMLSKVKGGKLATMLYPARVISFIISDVKNDDLSIIASGPLTRIDYRIEDLMETIKKYLGNDERIKMYRNIDDIYFNNVKQYIILKNRDFLDYIYSNINDDAVNLGSNFSGNVEDLSLILHNILKNIYSSKRKPFYFMLGGETTVDVKGHGSGGRNQELVLRFMKNSSNSEVYTIASFGTDGIDGVSPAAGGIVDSDHEIDNINEYLNRNDSYNLLIKNHGAIITGRTGNNVSDIIIGLYYNK.

Position 57 (lysine 57) interacts with substrate.

This sequence belongs to the glycerate kinase type-1 family. Homodimer. Mg(2+) is required as a cofactor. The cofactor is Ni(2+). Requires Mn(2+) as cofactor. Co(2+) serves as cofactor.

It catalyses the reaction (R)-glycerate + ATP = (2R)-2-phosphoglycerate + ADP + H(+). Its function is as follows. Catalyzes the ATP-dependent phosphorylation of D-glycerate to 2-phosphoglycerate. It can also partially utilize GTP, CTP or UTP as phosphate donor. This is Glycerate 2-kinase (gck) from Picrophilus torridus (strain ATCC 700027 / DSM 9790 / JCM 10055 / NBRC 100828 / KAW 2/3).